Consider the following 397-residue polypeptide: CCA-adding enzyme (397 aa).

ATP contacts are provided by G26 and R29. Positions 26 and 29 each coordinate CTP. Positions 39 and 41 each coordinate Mg(2+). Positions 110, 153, 156, 159, and 162 each coordinate ATP. CTP contacts are provided by R110, D153, R156, R159, and R162.

This sequence belongs to the tRNA nucleotidyltransferase/poly(A) polymerase family. Bacterial CCA-adding enzyme type 3 subfamily. As to quaternary structure, homodimer. Mg(2+) is required as a cofactor.

It catalyses the reaction a tRNA precursor + 2 CTP + ATP = a tRNA with a 3' CCA end + 3 diphosphate. It carries out the reaction a tRNA with a 3' CCA end + 2 CTP + ATP = a tRNA with a 3' CCACCA end + 3 diphosphate. Functionally, catalyzes the addition and repair of the essential 3'-terminal CCA sequence in tRNAs without using a nucleic acid template. Adds these three nucleotides in the order of C, C, and A to the tRNA nucleotide-73, using CTP and ATP as substrates and producing inorganic pyrophosphate. tRNA 3'-terminal CCA addition is required both for tRNA processing and repair. Also involved in tRNA surveillance by mediating tandem CCA addition to generate a CCACCA at the 3' terminus of unstable tRNAs. While stable tRNAs receive only 3'-terminal CCA, unstable tRNAs are marked with CCACCA and rapidly degraded. In Bacillus cereus (strain ATCC 10987 / NRS 248), this protein is CCA-adding enzyme.